Consider the following 454-residue polypeptide: Innexin-19 (454 aa).

At Met1–Thr48 the chain is on the cytoplasmic side. Residues Pro49–Ile69 form a helical membrane-spanning segment. Residues Glu70 to Tyr118 are Extracellular-facing. Residues Gln119–Trp139 traverse the membrane as a helical segment. Topologically, residues Arg140–Ser214 are cytoplasmic. Residues Ile215 to Leu235 traverse the membrane as a helical segment. The Extracellular segment spans residues Asn236–Lys300. Residues Val301 to Ile321 traverse the membrane as a helical segment. The Cytoplasmic segment spans residues Tyr322–Leu454.

It belongs to the pannexin family. In terms of tissue distribution, specifically expressed in sensory neurons and interneurons in the head and tail. Expressed in neurons AWC, ASH, AFD, ASI, ADL, ASK, BAG, AWB, and ADF (head sensory neurons); ADA, AIZ, RIC, AIY, and AIM (head interneurons); PHA and PHB (tail sensory neurons); and PVC and PVQ (tail interneurons).

The protein localises to the cell membrane. It is found in the cell junction. It localises to the gap junction. Functionally, structural component of the gap junctions that specifically coordinates left-right asymmetry in the developing nervous system. Acts by forming gap junction network linking embryonic neurons and providing electrical coupling between cells, leading to promote or inhibit AWC signaling. Required for the left and right AWC olfactory neurons to establish asymmetric patterns of gene expression during embryogenesis. Acts autonomously. The protein is Innexin-19 (inx-19) of Caenorhabditis elegans.